The primary structure comprises 245 residues: Biosynthetic peptidoglycan transglycosylase (245 aa).

The chain crosses the membrane as a helical span at residues 19–41; sequence CLRWVLAAPLLFAAASVLQVLFL.

The protein belongs to the glycosyltransferase 51 family.

It localises to the cell inner membrane. It catalyses the reaction [GlcNAc-(1-&gt;4)-Mur2Ac(oyl-L-Ala-gamma-D-Glu-L-Lys-D-Ala-D-Ala)](n)-di-trans,octa-cis-undecaprenyl diphosphate + beta-D-GlcNAc-(1-&gt;4)-Mur2Ac(oyl-L-Ala-gamma-D-Glu-L-Lys-D-Ala-D-Ala)-di-trans,octa-cis-undecaprenyl diphosphate = [GlcNAc-(1-&gt;4)-Mur2Ac(oyl-L-Ala-gamma-D-Glu-L-Lys-D-Ala-D-Ala)](n+1)-di-trans,octa-cis-undecaprenyl diphosphate + di-trans,octa-cis-undecaprenyl diphosphate + H(+). The protein operates within cell wall biogenesis; peptidoglycan biosynthesis. Functionally, peptidoglycan polymerase that catalyzes glycan chain elongation from lipid-linked precursors. The protein is Biosynthetic peptidoglycan transglycosylase of Xanthomonas oryzae pv. oryzae (strain KACC10331 / KXO85).